The chain runs to 471 residues: Ubiquitin carboxyl-terminal hydrolase calypso (471 aa).

Positions 45 to 276 (GWLELESDPG…IRFNLMAVVP (232 aa)) constitute a UCH catalytic domain. The Nucleophile role is filled by Cys-131. His-213 serves as the catalytic Proton donor. 2 coiled-coil regions span residues 240-256 (WEDS…VMAE) and 298-324 (GTLQ…DTPT). Residues 307–326 (DEQGESGNGDSQRPDTPTTL) form a disordered region. Residues 314-326 (NGDSQRPDTPTTL) show a composition bias toward polar residues. In terms of domain architecture, ULD spans 375–403 (NYDKFICTFLSMLAHQGVLGELVSQHLLP). The tract at residues 405-471 (KKVSGQGAAN…KGRNKCRKRK (67 aa)) is positively charged C-terminal tail required for binding nucleosomes. The interval 412–471 (AANRISKQSTTASAGGSTAAGTASTPKTQQQQAAAAKNGKSPSKTPGRRRKGRNKCRKRK) is disordered. A compositionally biased stretch (low complexity) spans 420 to 447 (STTASAGGSTAAGTASTPKTQQQQAAAA). Over residues 457–471 (PGRRRKGRNKCRKRK) the composition is skewed to basic residues.

This sequence belongs to the peptidase C12 family. BAP1 subfamily. In terms of assembly, catalytic component of the polycomb repressive deubiquitinase (PR-DUB) complex, at least composed of caly/calypso, Asx and sba (MBD5/6 homolog). The PR-DUB complex associates with nucleosomes to mediate deubiquitination of histone H2AK118ub1 substrates; the association requires the positively charged C-terminal tail of caly, probably due to direct binding of DNA. Interacts (via ULD domain) with Asx (via DEUBAD domain); the interaction produces a stable heterodimer with a composite binding site for ubiquitin. Homodimerizes (via coiled-coil hinge-region between the UCH and ULD domains) to mediate assembly of 2 copies of the caly-Asx heterodimer into a bisymmetric tetramer; dimerization enhances PR-DUB association with nucleosomes.

The protein localises to the nucleus. The enzyme catalyses Thiol-dependent hydrolysis of ester, thioester, amide, peptide and isopeptide bonds formed by the C-terminal Gly of ubiquitin (a 76-residue protein attached to proteins as an intracellular targeting signal).. In terms of biological role, catalytic component of the polycomb repressive deubiquitinase (PR-DUB) complex, a complex that specifically mediates deubiquitination of histone H2A monoubiquitinated at 'Lys-119' (H2AK118ub1). Mediates bisymmetric organization of the PR-DUB complex and is involved in association with nucleosomes to mediate deubiquitination. Does not deubiquitinate monoubiquitinated histone H2B. Required to maintain the transcriptionally repressive state of homeotic genes throughout development. The PR-DUB complex has weak or no activity toward 'Lys-48'- and 'Lys-63'-linked polyubiquitin chains. Polycomb group (PcG) protein. In Drosophila melanogaster (Fruit fly), this protein is Ubiquitin carboxyl-terminal hydrolase calypso.